The following is a 183-amino-acid chain: Lipid droplet coating protein Cap20 (183 aa).

This sequence belongs to the perilipin family.

The protein localises to the lipid droplet. Lipid droplet coating protein that regulates lipid metabolism, appressorial turgor pressure, and virulence. Appressorial turgor pressure is important for the mechanical penetration of the host cuticle during infection. The polypeptide is Lipid droplet coating protein Cap20 (Cap20) (Colletotrichum gloeosporioides (Anthracnose fungus)).